We begin with the raw amino-acid sequence, 141 residues long: Large ribosomal subunit protein uL16 (141 aa).

Residues 1–16 (MLMPRKPPKGFRKPHH) show a composition bias toward basic residues. The tract at residues 1–27 (MLMPRKPPKGFRKPHHPDRSGASKGGN) is disordered.

The protein belongs to the universal ribosomal protein uL16 family. Part of the 50S ribosomal subunit.

Functionally, binds 23S rRNA and is also seen to make contacts with the A and possibly P site tRNAs. The sequence is that of Large ribosomal subunit protein uL16 from Salinispora arenicola (strain CNS-205).